A 739-amino-acid chain; its full sequence is Poly(A) polymerase alpha (739 aa).

Residues 1–17 (MPFPVTTQGSQQTQPPQ) show a composition bias toward low complexity. Residues 1 to 23 (MPFPVTTQGSQQTQPPQKHYGIT) are disordered. Residues Ser-10 and Ser-24 each carry the phosphoserine modification. ATP is bound by residues 100–102 (FGS), Thr-109, 113–115 (DID), Asp-167, Lys-228, Tyr-237, and 246–247 (GV). Mg(2+)-binding residues include Asp-113, Asp-115, and Asp-167. Glycyl lysine isopeptide (Lys-Gly) (interchain with G-Cter in SUMO) cross-links involve residues Lys-444, Lys-445, Lys-506, and Lys-507. Positions 490–507 (RKQLHQLLPSHVLQKKKK) match the Nuclear localization signal 1 motif. Disordered regions lie at residues 501–565 (VLQK…AVTA) and 580–700 (QINS…TIQT). Residues 508–643 (HSTEGVKLTP…AKIPNPIVGV (136 aa)) are ser/Thr-rich. Low complexity predominate over residues 518 to 534 (LNDSSLDLSMDSDNSMS). The span at 535–557 (VPSPTSAMKTSPLNSSGSSQGRN) shows a compositional bias: polar residues. At Ser-537 the chain carries Phosphoserine; by MAPK. Position 558 is a phosphoserine (Ser-558). Over residues 583–594 (SSESSGGTSSES) the composition is skewed to low complexity. Over residues 595–604 (IPQTATQPAI) the composition is skewed to polar residues. A compositionally biased stretch (low complexity) spans 611 to 620 (TVSRVVSSTR). N6-acetyllysine is present on residues Lys-635 and Lys-644. The short motif at 644-659 (KRTSSPHKEESPKKTK) is the Nuclear localization signal 2 element. 2 stretches are compositionally biased toward basic and acidic residues: residues 649-660 (PHKEESPKKTKT) and 676-686 (GHDKTETKEQL). The tract at residues 671-739 (CLALSGHDKT…KNSIKLRLNR (69 aa)) is required for interaction with NUDT21. Residues 688 to 700 (TETSTTQSETIQT) show a composition bias toward low complexity. Lys-730 bears the N6-acetyllysine; alternate mark. Lys-730 is covalently cross-linked (Glycyl lysine isopeptide (Lys-Gly) (interchain with G-Cter in SUMO); alternate). Phosphoserine is present on Ser-732. Lys-734 bears the N6-acetyllysine; alternate mark. Lys-734 is covalently cross-linked (Glycyl lysine isopeptide (Lys-Gly) (interchain with G-Cter in SUMO); alternate).

The protein belongs to the poly(A) polymerase family. In terms of assembly, monomer. Found in a complex with CPSF1, FIP1L1 and PAPOLA. Interacts with AHCYL1 and FIP1L1; the interaction with AHCYL1 seems to increase interaction with FIP1L1. Interacts with NUDT21; the interaction is diminished by acetylation. Interacts with KPNB1; the interaction promotes PAP nuclear import and is inhibited by acetylation of PAP. Requires Mg(2+) as cofactor. It depends on Mn(2+) as a cofactor. In terms of processing, polysumoylated. Varying sumoylation depending on tissue- and cell-type. Highly sumoylated in bladder and NIH 3T3 cells. Sumoylation is required for nuclear localization and enhances PAP stability. Desumoylated by SENP1. Inhibits polymerase activity. Hyperphosphorylation on multiple CDK2 consensus and non-consensus sites in the C-terminal Ser/Thr-rich region represses PAP activity in late M-phase. Phosphorylation/dephosphorylation may regulate the interaction between PAP and CPSF. Post-translationally, acetylated in the C-terminus. Acetylation decreases interaction with NUDT21 and KPNB1, and inhibits nuclear localization through inhibiting binding to the importin alpha/beta complex.

It is found in the nucleus. The enzyme catalyses RNA(n) + ATP = RNA(n)-3'-adenine ribonucleotide + diphosphate. Functionally, polymerase that creates the 3'-poly(A) tail of mRNA's. Also required for the endoribonucleolytic cleavage reaction at some polyadenylation sites. May acquire specificity through interaction with a cleavage and polyadenylation specificity factor (CPSF) at its C-terminus. This chain is Poly(A) polymerase alpha (PAPOLA), found in Bos taurus (Bovine).